The chain runs to 271 residues: Ribonuclease HII (271 aa).

The region spanning 84–271 (VLIAGVDEVG…HRMSFLSNYI (188 aa)) is the RNase H type-2 domain. Asp-90, Glu-91, and Asp-187 together coordinate a divalent metal cation.

It belongs to the RNase HII family. The cofactor is Mn(2+). Mg(2+) is required as a cofactor.

It is found in the cytoplasm. The enzyme catalyses Endonucleolytic cleavage to 5'-phosphomonoester.. Its function is as follows. Endonuclease that specifically degrades the RNA of RNA-DNA hybrids. This is Ribonuclease HII from Clostridium tetani (strain Massachusetts / E88).